The following is a 23-amino-acid chain: Dermaseptin III-like peptide (23 aa).

Expressed by the skin glands.

The protein localises to the secreted. Possesses a potent antimicrobial activity against bacteria, fungi and protozoa. Probably acts by disturbing membrane functions with its amphipathic structure. The polypeptide is Dermaseptin III-like peptide (Phyllomedusa burmeisteri (Brazilian common walking leaf frog)).